We begin with the raw amino-acid sequence, 95 residues long: Small ribosomal subunit protein bS6 (95 aa).

This sequence belongs to the bacterial ribosomal protein bS6 family.

Its function is as follows. Binds together with bS18 to 16S ribosomal RNA. The polypeptide is Small ribosomal subunit protein bS6 (Corynebacterium diphtheriae (strain ATCC 700971 / NCTC 13129 / Biotype gravis)).